The primary structure comprises 235 residues: Pyridoxine/pyridoxamine 5'-phosphate oxidase (235 aa).

Substrate-binding positions include 30-33 (RQEY) and Lys88. Residues 83–88 (RTVLLK), 98–99 (YT), Arg104, Lys105, and Gln127 contribute to the FMN site. Substrate is bound by residues Tyr145, Arg149, and Ser153. Residues 162–163 (QS) and Trp207 contribute to the FMN site. 213–215 (RLH) contributes to the substrate binding site. Arg217 contributes to the FMN binding site.

The protein belongs to the pyridoxamine 5'-phosphate oxidase family. In terms of assembly, homodimer. Requires FMN as cofactor.

It catalyses the reaction pyridoxamine 5'-phosphate + O2 + H2O = pyridoxal 5'-phosphate + H2O2 + NH4(+). The enzyme catalyses pyridoxine 5'-phosphate + O2 = pyridoxal 5'-phosphate + H2O2. It participates in cofactor metabolism; pyridoxal 5'-phosphate salvage; pyridoxal 5'-phosphate from pyridoxamine 5'-phosphate: step 1/1. It functions in the pathway cofactor metabolism; pyridoxal 5'-phosphate salvage; pyridoxal 5'-phosphate from pyridoxine 5'-phosphate: step 1/1. In terms of biological role, catalyzes the oxidation of either pyridoxine 5'-phosphate (PNP) or pyridoxamine 5'-phosphate (PMP) into pyridoxal 5'-phosphate (PLP). The protein is Pyridoxine/pyridoxamine 5'-phosphate oxidase of Bacteroides fragilis (strain YCH46).